The sequence spans 376 residues: MSTTVIGPYEDDDPTEACSTIHHEVIGTTTCLSGGEDVPLAPLTTLKVGGPARHLVIATTHDELLATVRDCDRRGEPCLVLGGGSNVLVGDNGFDGTVVRVATSGLSAEVSSCGGALVTVAAGQVWDDFVVHAIEQEWIGPEFLSGIPGLVGSTPIQNVGAYGVEVGEFIARVRTWDRVDDTQRTFTADQCDFGYRSSRFKAEPDRYVVLDVTMQFNLGTRSLPVRYAELARRLGVEPGERVDTSQVRETVLAVRAGKGMVLNPNDHDTWSAGSFFTNPLVSPDQVPEGAPAFAQSDGRVKTSAAWLIDHAGYGKGFKVAEDAPASLSTKHVLALTNRGGASSGDFTTLARTVIDGVRDVYGITLVPEPRLIGCTI.

Residues 48 to 219 enclose the FAD-binding PCMH-type domain; it reads VGGPARHLVI…LDVTMQFNLG (172 aa). Residue R196 is part of the active site. S274 functions as the Proton donor in the catalytic mechanism. E368 is a catalytic residue.

Belongs to the MurB family. It depends on FAD as a cofactor.

The protein resides in the cytoplasm. The enzyme catalyses UDP-N-acetyl-alpha-D-muramate + NADP(+) = UDP-N-acetyl-3-O-(1-carboxyvinyl)-alpha-D-glucosamine + NADPH + H(+). Its pathway is cell wall biogenesis; peptidoglycan biosynthesis. Cell wall formation. This is UDP-N-acetylenolpyruvoylglucosamine reductase from Cutibacterium acnes (strain DSM 16379 / KPA171202) (Propionibacterium acnes).